The primary structure comprises 1026 residues: Phosphoenolpyruvate carboxylase (1026 aa).

Active-site residues include His199 and Lys672.

This sequence belongs to the PEPCase type 1 family. The cofactor is Mg(2+).

The catalysed reaction is oxaloacetate + phosphate = phosphoenolpyruvate + hydrogencarbonate. In terms of biological role, forms oxaloacetate, a four-carbon dicarboxylic acid source for the tricarboxylic acid cycle. The polypeptide is Phosphoenolpyruvate carboxylase (ppc) (Nostoc sp. (strain PCC 7120 / SAG 25.82 / UTEX 2576)).